We begin with the raw amino-acid sequence, 105 residues long: Met repressor (105 aa).

Belongs to the MetJ family. As to quaternary structure, homodimer.

The protein resides in the cytoplasm. Functionally, this regulatory protein, when combined with SAM (S-adenosylmethionine) represses the expression of the methionine regulon and of enzymes involved in SAM synthesis. This chain is Met repressor, found in Serratia proteamaculans (strain 568).